Consider the following 154-residue polypeptide: Endoribonuclease YbeY (154 aa).

Residues histidine 114, histidine 118, and histidine 124 each contribute to the Zn(2+) site.

Belongs to the endoribonuclease YbeY family. Zn(2+) is required as a cofactor.

The protein localises to the cytoplasm. Functionally, single strand-specific metallo-endoribonuclease involved in late-stage 70S ribosome quality control and in maturation of the 3' terminus of the 16S rRNA. This Aggregatibacter actinomycetemcomitans (Actinobacillus actinomycetemcomitans) protein is Endoribonuclease YbeY.